A 357-amino-acid polypeptide reads, in one-letter code: Mating-type protein MAT-1 (357 aa).

Positions 53–108 form a DNA-binding region, alpha box; sequence RAKRPLNAFMAFRTYYLKLFPDTQQKNASGFLTQLWGGDPHRNKWALIAKVYSFLR.

This sequence belongs to the MATALPHA1 family.

The protein localises to the nucleus. Mating type proteins are sequence specific DNA-binding proteins that act as master switches in fungal differentiation by controlling gene expression in a cell type-specific fashion. Transcriptional activator that induces the transcription of alpha-specific genes. The chain is Mating-type protein MAT-1 (MAT1) from Fusarium oxysporum (Fusarium vascular wilt).